The chain runs to 198 residues: Urease accessory protein UreE (198 aa).

Positions 137–198 (ARGAYHSPGG…RGHDHDHKHD (62 aa)) are disordered. Basic and acidic residues predominate over residues 149-198 (HGHDHDHNHDHGHDHAHDHNHGHDHDHEHGYEHEHEHRHDRGHDHDHKHD).

The protein belongs to the UreE family.

The protein localises to the cytoplasm. Its function is as follows. Involved in urease metallocenter assembly. Binds nickel. Probably functions as a nickel donor during metallocenter assembly. This chain is Urease accessory protein UreE, found in Rhizobium johnstonii (strain DSM 114642 / LMG 32736 / 3841) (Rhizobium leguminosarum bv. viciae).